The chain runs to 135 residues: Regulator of ribonuclease activity B (135 aa).

A disordered region spans residues 114–135; that stretch reads WGTYFESDEDDEEDESEDKPEA. Residues 119–135 are compositionally biased toward acidic residues; that stretch reads ESDEDDEEDESEDKPEA.

The protein belongs to the RraB family. In terms of assembly, interacts with the C-terminal region of Rne.

The protein resides in the cytoplasm. Functionally, globally modulates RNA abundance by binding to RNase E (Rne) and regulating its endonucleolytic activity. Can modulate Rne action in a substrate-dependent manner by altering the composition of the degradosome. The protein is Regulator of ribonuclease activity B of Photobacterium profundum (strain SS9).